Consider the following 610-residue polypeptide: Cytosolic 5'-nucleotidase 1B (610 aa).

2 disordered regions span residues 1–34 (MSQT…DKTG) and 101–277 (GSQE…DEDD). A compositionally biased stretch (basic and acidic residues) spans 9-34 (KKNEPGMRSSKESLEAEKRKESDKTG). Residues 119-132 (SQWSRISRSPSTKA) show a composition bias toward polar residues. Residues 148–166 (PSSSTSSRTPSTSPSLHDS) are compositionally biased toward low complexity. Positions 167-183 (SPPPLSGQPSLQPPASP) are enriched in pro residues. Residues 236-265 (SRTSPTEWKSSSQRRGIYPASTQLDRNSLS) are compositionally biased toward polar residues. The active-site Nucleophile is the Asp-467.

This sequence belongs to the 5'-nucleotidase type 3 family. The cofactor is Mg(2+). As to expression, highly expressed in testis, placenta and pancreas. Detected at lower levels in heart, kidney, liver and lung.

It is found in the cytoplasm. It catalyses the reaction a ribonucleoside 5'-phosphate + H2O = a ribonucleoside + phosphate. The enzyme catalyses AMP + H2O = adenosine + phosphate. Its activity is regulated as follows. Activated by ADP. In terms of biological role, catalyzes the hydrolysis of nucleotide monophosphates, releasing inorganic phosphate and the corresponding nucleoside, AMP is the major substrate. In Homo sapiens (Human), this protein is Cytosolic 5'-nucleotidase 1B (NT5C1B).